Consider the following 592-residue polypeptide: A-type ATP synthase subunit A (592 aa).

Residue glycine 233 to threonine 240 participates in ATP binding.

It belongs to the ATPase alpha/beta chains family. Has multiple subunits with at least A(3), B(3), C, D, E, F, H, I and proteolipid K(x).

It localises to the cell membrane. The enzyme catalyses ATP + H2O + 4 H(+)(in) = ADP + phosphate + 5 H(+)(out). Component of the A-type ATP synthase that produces ATP from ADP in the presence of a proton gradient across the membrane. The A chain is the catalytic subunit. In Saccharolobus islandicus (strain M.16.27) (Sulfolobus islandicus), this protein is A-type ATP synthase subunit A.